Reading from the N-terminus, the 286-residue chain is Bifunctional protein FolD (286 aa).

NADP(+) contacts are provided by residues 165 to 167 (GRS) and Ser190.

It belongs to the tetrahydrofolate dehydrogenase/cyclohydrolase family. In terms of assembly, homodimer.

The enzyme catalyses (6R)-5,10-methylene-5,6,7,8-tetrahydrofolate + NADP(+) = (6R)-5,10-methenyltetrahydrofolate + NADPH. It carries out the reaction (6R)-5,10-methenyltetrahydrofolate + H2O = (6R)-10-formyltetrahydrofolate + H(+). The protein operates within one-carbon metabolism; tetrahydrofolate interconversion. Functionally, catalyzes the oxidation of 5,10-methylenetetrahydrofolate to 5,10-methenyltetrahydrofolate and then the hydrolysis of 5,10-methenyltetrahydrofolate to 10-formyltetrahydrofolate. The sequence is that of Bifunctional protein FolD from Paraburkholderia phytofirmans (strain DSM 17436 / LMG 22146 / PsJN) (Burkholderia phytofirmans).